The sequence spans 295 residues: ATP synthase gamma chain (295 aa).

Belongs to the ATPase gamma chain family. F-type ATPases have 2 components, CF(1) - the catalytic core - and CF(0) - the membrane proton channel. CF(1) has five subunits: alpha(3), beta(3), gamma(1), delta(1), epsilon(1). CF(0) has three main subunits: a, b and c.

Its subcellular location is the cell inner membrane. In terms of biological role, produces ATP from ADP in the presence of a proton gradient across the membrane. The gamma chain is believed to be important in regulating ATPase activity and the flow of protons through the CF(0) complex. The sequence is that of ATP synthase gamma chain from Methylorubrum populi (strain ATCC BAA-705 / NCIMB 13946 / BJ001) (Methylobacterium populi).